The sequence spans 67 residues: Large ribosomal subunit protein uL29 (67 aa).

This sequence belongs to the universal ribosomal protein uL29 family.

In Exiguobacterium sibiricum (strain DSM 17290 / CCUG 55495 / CIP 109462 / JCM 13490 / 255-15), this protein is Large ribosomal subunit protein uL29.